The following is a 171-amino-acid chain: Small ribosomal subunit protein uS5 (171 aa).

Residues 15–78 form the S5 DRBM domain; that stretch reads YEEKVVKIKR…EKAKKQLIRI (64 aa).

The protein belongs to the universal ribosomal protein uS5 family. In terms of assembly, part of the 30S ribosomal subunit. Contacts proteins S4 and S8.

Functionally, with S4 and S12 plays an important role in translational accuracy. In terms of biological role, located at the back of the 30S subunit body where it stabilizes the conformation of the head with respect to the body. This is Small ribosomal subunit protein uS5 from Phytoplasma australiense.